We begin with the raw amino-acid sequence, 1005 residues long: Band 4.1-like protein 2 (1005 aa).

A disordered region spans residues 1 to 80 (MTTEVGSVSE…SRGISRFIPP (80 aa)). Threonine 2 carries the N-acetylthreonine modification. Position 7 is a phosphoserine (serine 7). Over residues 22-31 (ATKEKPKEVA) the composition is skewed to basic and acidic residues. A phosphoserine mark is found at serine 39, serine 58, and serine 87. The residue at position 89 (threonine 89) is a Phosphothreonine. The disordered stretch occupies residues 93–196 (AKDGGDKKEP…GGAAKRETKE (104 aa)). Composition is skewed to basic and acidic residues over residues 111–157 (VLDK…EKPS) and 169–196 (VSKE…ETKE). Residues lysine 140 and lysine 144 each participate in a glycyl lysine isopeptide (Lys-Gly) (interchain with G-Cter in SUMO2) cross-link. Residues serine 170, serine 208, serine 386, serine 402, serine 499, serine 550, serine 562, serine 575, serine 598, and serine 614 each carry the phosphoserine modification. The FERM domain maps to 218–499 (VQCKVTLLDG…EHHTFYRLVS (282 aa)). The interval 502–610 (QPPKAKFLTL…KAPHLQLIEG (109 aa)) is hydrophilic. The segment at 611 to 676 (KKNSLRVEGD…WEKRRITPLS (66 aa)) is spectrin--actin-binding. The residue at position 623 (tyrosine 623) is a Phosphotyrosine. Phosphoserine occurs at positions 627 and 647. The tract at residues 652–800 (KRNFMESTPE…EEAVPEASPV (149 aa)) is disordered. Polar residues predominate over residues 675–686 (LSLQTQGSSHET). A compositionally biased stretch (basic and acidic residues) spans 690-711 (VEEKKRAEVGKDERVITEEMNG). Serine 715 and serine 718 each carry phosphoserine. The segment covering 734–746 (STSLSSESSSSSS) has biased composition (low complexity). Basic and acidic residues-rich tracts occupy residues 754-770 (GEYR…IREE) and 780-793 (EPRP…REEA). Threonine 763 bears the Phosphothreonine mark. Position 828 is a phosphoserine (serine 828). Positions 855–1005 (HVDIDVLPQI…ETELAEEGED (151 aa)) are C-terminal (CTD).

Interacts with FCGR1A. Interacts with TRPC4. Interacts (via CTD domain) with FKBP2. Interacts with NUMA1; this interaction is negatively regulated by CDK1 during metaphase and promotes anaphase-specific localization of NUMA1 in symmetrically dividing cells. In terms of tissue distribution, widely expressed.

Its subcellular location is the cytoplasm. It localises to the cytoskeleton. The protein localises to the cell cortex. It is found in the cell membrane. Its function is as follows. Required for dynein-dynactin complex and NUMA1 recruitment at the mitotic cell cortex during anaphase. The sequence is that of Band 4.1-like protein 2 from Homo sapiens (Human).